The primary structure comprises 514 residues: MKRILFTAGGCLFYLLLAVKAYAYDCSATPAYQDGVNYQSGDLVSNTGAAYRCNVAGWCSTGGAYAPGTGWAWTEAWDELGSCDGGAGSSGSSSSSSSSSSSSSGSSSSSSGSGSSSGGTSCDGIEAWQVASIYTEGNVVQQNGERYIANWWNQGQSPEDNSGAYEVWSAAGSCSGAGSSSSSSGGTSSSGSSSSGVSSSGGSSGGDSPIARHGKLHVCGNGLCNADNVPVQLRGMSTHGLQWYGWGNCITGNSLDTLAEDWNADILRVSLYVQEGGYETDPAGYTAQVSHIIDEVTARGMYVLVDWHQLDPGDPNANLDNARQFFTDIAQAHGDKTNIIYDVANEPNNVSWDAIQRYAMEVIPVIRQYAPDAVVLVGTHGWASLGISDGGSAQDIFNNPVTIDNIMYTFHFYAASHGQVYRDELRSALERGMPVFVTEWGSQTYTGDDGNDFVSTQAYLDLLDQYQISWTNWNYSDDFRTGAVWNTGTCSADSWGVGNLKEAGAWVRDKIRNR.

Residues 1-23 (MKRILFTAGGCLFYLLLAVKAYA) form the signal peptide. Low complexity-rich tracts occupy residues 91-114 (GSSS…SGSG) and 179-201 (SSSS…SSSG). Disordered stretches follow at residues 91–118 (GSSS…SSSG) and 179–208 (SSSS…GGDS). The active-site Proton donor is the Glu346. Glu439 serves as the catalytic Nucleophile.

It belongs to the glycosyl hydrolase 5 (cellulase A) family.

It carries out the reaction Endohydrolysis of (1-&gt;4)-beta-D-glucosidic linkages in cellulose, lichenin and cereal beta-D-glucans.. With respect to regulation, exhibits strong halostability and halotolerance. The activity increases about tenfold in the presence of 0.5 M NaCl, and about fivefold in the presence of 4.0 M NaCl. Tolerates detergents, but activity is decreased in the presence of EDTA. Activity is enhanced in the presence of Mn(2+), Ca(2+), Ba(2+) or Mg(2+), and decreased in the presence of Zn(2+), Cu(2+), Al(3+) or Fe(3+). In terms of biological role, endoglucanase that exhibits highest activity toward barley beta-glucan, lower activity toward carboxymethyl cellulose (CMC-Na), and marginal activity toward laminarin and xylan. The sequence is that of Endoglucanase MaCel5A from Microbulbifer sp. (strain ALW1).